The chain runs to 106 residues: Probable insulin-like peptide beta-type 2 (106 aa).

The N-terminal stretch at 1–15 is a signal peptide; sequence MNAIIFCLLFTTVTA. A propeptide spanning residues 16 to 56 is cleaved from the precursor; sequence TYEVFGKGIEHRNEHLIINQLDIIPVESTPTPNRASRVQKR. Cystine bridges form between Cys58-Cys86, Cys70-Cys99, Cys73-Cys100, and Cys85-Cys90.

Belongs to the insulin family.

The protein localises to the secreted. The chain is Probable insulin-like peptide beta-type 2 (ins-2) from Caenorhabditis elegans.